The primary structure comprises 385 residues: 8-amino-7-oxononanoate synthase (385 aa).

R21 lines the substrate pocket. Pyridoxal 5'-phosphate is bound at residue 108–109 (GF). A substrate-binding site is contributed by H133. 3 residues coordinate pyridoxal 5'-phosphate: S179, H207, and T233. At K236 the chain carries N6-(pyridoxal phosphate)lysine. Position 352 (T352) interacts with substrate.

This sequence belongs to the class-II pyridoxal-phosphate-dependent aminotransferase family. BioF subfamily. Homodimer. Requires pyridoxal 5'-phosphate as cofactor.

It carries out the reaction 6-carboxyhexanoyl-[ACP] + L-alanine + H(+) = (8S)-8-amino-7-oxononanoate + holo-[ACP] + CO2. It participates in cofactor biosynthesis; biotin biosynthesis. Its function is as follows. Catalyzes the decarboxylative condensation of pimeloyl-[acyl-carrier protein] and L-alanine to produce 8-amino-7-oxononanoate (AON), [acyl-carrier protein], and carbon dioxide. This Salmonella paratyphi A (strain ATCC 9150 / SARB42) protein is 8-amino-7-oxononanoate synthase.